The sequence spans 696 residues: D-(-)-3-hydroxybutyrate oligomer hydrolase (696 aa).

The first 20 residues, M1–A20, serve as a signal peptide directing secretion. Residue S309 is the Charge relay system of the active site.

This sequence belongs to the D-(-)-3-hydroxybutyrate oligomer hydrolase family.

It is found in the secreted. The catalysed reaction is (3R)-hydroxybutanoate dimer + H2O = 2 (R)-3-hydroxybutanoate + H(+). Its pathway is lipid metabolism; butanoate metabolism. In terms of biological role, participates in the degradation of poly-3-hydroxybutyrate (PHB). It works downstream of poly(3-hydroxybutyrate) depolymerase, hydrolyzing D(-)-3-hydroxybutyrate oligomers of various length (3HB-oligomers) into 3HB-monomers. The protein is D-(-)-3-hydroxybutyrate oligomer hydrolase of Burkholderia lata (strain ATCC 17760 / DSM 23089 / LMG 22485 / NCIMB 9086 / R18194 / 383).